The following is a 402-amino-acid chain: Phosphoglycerate kinase (402 aa).

Residues 24–26 (DFN), Arg-40, 63–66 (HFGR), Arg-122, and Arg-155 each bind substrate. ATP-binding positions include Lys-206, Gly-297, Glu-328, and 358–361 (GGDS).

Belongs to the phosphoglycerate kinase family. Monomer.

The protein localises to the cytoplasm. The catalysed reaction is (2R)-3-phosphoglycerate + ATP = (2R)-3-phospho-glyceroyl phosphate + ADP. The protein operates within carbohydrate degradation; glycolysis; pyruvate from D-glyceraldehyde 3-phosphate: step 2/5. This chain is Phosphoglycerate kinase, found in Prochlorococcus marinus (strain MIT 9312).